The chain runs to 156 residues: Crossover junction endodeoxyribonuclease RuvC (156 aa).

Active-site residues include aspartate 9, glutamate 69, and aspartate 141. Mg(2+) contacts are provided by aspartate 9, glutamate 69, and aspartate 141.

Belongs to the RuvC family. Homodimer which binds Holliday junction (HJ) DNA. The HJ becomes 2-fold symmetrical on binding to RuvC with unstacked arms; it has a different conformation from HJ DNA in complex with RuvA. In the full resolvosome a probable DNA-RuvA(4)-RuvB(12)-RuvC(2) complex forms which resolves the HJ. The cofactor is Mg(2+).

It is found in the cytoplasm. It carries out the reaction Endonucleolytic cleavage at a junction such as a reciprocal single-stranded crossover between two homologous DNA duplexes (Holliday junction).. Its function is as follows. The RuvA-RuvB-RuvC complex processes Holliday junction (HJ) DNA during genetic recombination and DNA repair. Endonuclease that resolves HJ intermediates. Cleaves cruciform DNA by making single-stranded nicks across the HJ at symmetrical positions within the homologous arms, yielding a 5'-phosphate and a 3'-hydroxyl group; requires a central core of homology in the junction. The consensus cleavage sequence is 5'-(A/T)TT(C/G)-3'. Cleavage occurs on the 3'-side of the TT dinucleotide at the point of strand exchange. HJ branch migration catalyzed by RuvA-RuvB allows RuvC to scan DNA until it finds its consensus sequence, where it cleaves and resolves the cruciform DNA. This Acaryochloris marina (strain MBIC 11017) protein is Crossover junction endodeoxyribonuclease RuvC.